The following is a 456-amino-acid chain: MCKLPFSKSRMRQLMEAYIRQKRASPGMVQASDLQISRPMSGMRSNSRELHAYDGPMQFISSPLNPDQILTNGSPVGGTVAMNSTRNHSNNMRTLSTISQEADLIEEISSHELEDEESSPVTVIEQQQTAPHSANSTHSQRPSTTRQPSFNDTLDEDDYTNRNIAGAAPVRPVGLASSPYKEAGLDGSSMETSNGAGGESEGDVIGNIDQFVMQPAPQGVLYKCRITRDRKGMDRGLFPIYYLHLERDYGKKIFLLGGRKRKKSKTSNYIVSCDPTDLSRSADGFCGKLRSNVFGTSFTVFDSGNKDSTDSPRLDLAVIIYDTNILGFKGPRNMTVILPGMTEDDQRVKISSADPKQTGILDLYKMKNMDNIVELHNKTPVWNDETQSYVLNFHGRVTQASVKNFQLVHDSDPEYIVMQFGRTSEDVFTMDYRYPLCAMQAFAIALSSFDGKIACE.

The tract at residues 111–202 (HELEDEESSP…SNGAGGESEG (92 aa)) is disordered. The span at 120–152 (PVTVIEQQQTAPHSANSTHSQRPSTTRQPSFND) shows a compositional bias: polar residues. A Phosphoserine modification is found at Ser149.

Belongs to the TUB family.

The protein resides in the cytoplasm. It localises to the nucleus. Its subcellular location is the cell projection. The protein localises to the cilium membrane. It is found in the rhabdomere. In Drosophila pseudoobscura pseudoobscura (Fruit fly), this protein is Protein king tubby.